Here is a 270-residue protein sequence, read N- to C-terminus: tRNA pseudouridine synthase A (270 aa).

Asp60 (nucleophile) is an active-site residue. The segment at 107–111 (FHARF) is RNA binding. Residue Tyr118 participates in substrate binding. The tract at residues 168–172 (QCQSR) is interaction with tRNA.

This sequence belongs to the tRNA pseudouridine synthase TruA family. Homodimer.

The enzyme catalyses uridine(38/39/40) in tRNA = pseudouridine(38/39/40) in tRNA. Formation of pseudouridine at positions 38, 39 and 40 in the anticodon stem and loop of transfer RNAs. The polypeptide is tRNA pseudouridine synthase A (Citrobacter koseri (strain ATCC BAA-895 / CDC 4225-83 / SGSC4696)).